The following is a 109-amino-acid chain: Parvalbumin alpha (109 aa).

2 EF-hand domains span residues 38–73 (KTDA…FSAH) and 77–109 (LNDT…VAQA). Ca(2+) contacts are provided by Asp-51, Asp-53, Ser-55, Glu-62, Asp-90, Asp-92, Asp-94, Lys-96, and Glu-101.

The protein belongs to the parvalbumin family.

Functionally, in muscle, parvalbumin is thought to be involved in relaxation after contraction. It binds two calcium ions. In Triakis semifasciata (Leopard shark), this protein is Parvalbumin alpha.